A 65-amino-acid polypeptide reads, in one-letter code: Small ribosomal subunit protein bS21 (65 aa).

It belongs to the bacterial ribosomal protein bS21 family.

The polypeptide is Small ribosomal subunit protein bS21 (Aster yellows phytoplasma).